Reading from the N-terminus, the 208-residue chain is Ribonuclease HII (208 aa).

Residues 18–208 (GFYAGVDEVG…RPVKERLEAC (191 aa)) enclose the RNase H type-2 domain. Positions 24, 25, and 116 each coordinate a divalent metal cation.

It belongs to the RNase HII family. The cofactor is Mn(2+). Mg(2+) serves as cofactor.

Its subcellular location is the cytoplasm. It catalyses the reaction Endonucleolytic cleavage to 5'-phosphomonoester.. Its function is as follows. Endonuclease that specifically degrades the RNA of RNA-DNA hybrids. The protein is Ribonuclease HII of Shewanella loihica (strain ATCC BAA-1088 / PV-4).